A 177-amino-acid chain; its full sequence is Peptide deformylase (177 aa).

2 residues coordinate Fe cation: Cys98 and His140. Glu141 is a catalytic residue. Residue His144 coordinates Fe cation.

It belongs to the polypeptide deformylase family. It depends on Fe(2+) as a cofactor.

The catalysed reaction is N-terminal N-formyl-L-methionyl-[peptide] + H2O = N-terminal L-methionyl-[peptide] + formate. Removes the formyl group from the N-terminal Met of newly synthesized proteins. Requires at least a dipeptide for an efficient rate of reaction. N-terminal L-methionine is a prerequisite for activity but the enzyme has broad specificity at other positions. In Zymomonas mobilis subsp. mobilis (strain ATCC 31821 / ZM4 / CP4), this protein is Peptide deformylase.